Consider the following 629-residue polypeptide: tRNA uridine 5-carboxymethylaminomethyl modification enzyme MnmG (629 aa).

FAD-binding positions include 13-18 (GGGHAG), valine 125, and serine 180. Residue 273–287 (GPRYCPSIEDKVMRF) participates in NAD(+) binding. Residue glutamine 370 coordinates FAD.

The protein belongs to the MnmG family. Homodimer. Heterotetramer of two MnmE and two MnmG subunits. The cofactor is FAD.

The protein localises to the cytoplasm. In terms of biological role, NAD-binding protein involved in the addition of a carboxymethylaminomethyl (cmnm) group at the wobble position (U34) of certain tRNAs, forming tRNA-cmnm(5)s(2)U34. This is tRNA uridine 5-carboxymethylaminomethyl modification enzyme MnmG from Serratia proteamaculans (strain 568).